A 340-amino-acid chain; its full sequence is Putative 2-hydroxyacid dehydrogenase C1773.17c (340 aa).

NAD(+)-binding positions include 169–170 (AI), 249–251 (TAR), and aspartate 275. Residue arginine 251 is part of the active site. Glutamate 280 is a catalytic residue. The active-site Proton donor is the histidine 298. 298-301 (HCGV) contacts NAD(+).

It belongs to the D-isomer specific 2-hydroxyacid dehydrogenase family.

In Schizosaccharomyces pombe (strain 972 / ATCC 24843) (Fission yeast), this protein is Putative 2-hydroxyacid dehydrogenase C1773.17c.